The following is a 196-amino-acid chain: Peptidyl-tRNA hydrolase (196 aa).

Position 18 (tyrosine 18) interacts with tRNA. Histidine 23 (proton acceptor) is an active-site residue. TRNA is bound by residues phenylalanine 69, asparagine 71, and asparagine 117.

It belongs to the PTH family. Monomer.

It localises to the cytoplasm. It carries out the reaction an N-acyl-L-alpha-aminoacyl-tRNA + H2O = an N-acyl-L-amino acid + a tRNA + H(+). Hydrolyzes ribosome-free peptidyl-tRNAs (with 1 or more amino acids incorporated), which drop off the ribosome during protein synthesis, or as a result of ribosome stalling. Its function is as follows. Catalyzes the release of premature peptidyl moieties from peptidyl-tRNA molecules trapped in stalled 50S ribosomal subunits, and thus maintains levels of free tRNAs and 50S ribosomes. This chain is Peptidyl-tRNA hydrolase, found in Vibrio cholerae serotype O1 (strain ATCC 39315 / El Tor Inaba N16961).